The sequence spans 158 residues: Putative 8-oxo-dGTP diphosphatase YtkD (158 aa).

The Nudix hydrolase domain occupies Asp-6–Pro-145. A Nudix box motif is present at residues Gly-53–Gly-74. Mg(2+) is bound by residues Glu-68 and Glu-72.

This sequence belongs to the Nudix hydrolase family. It depends on Mg(2+) as a cofactor.

The catalysed reaction is 8-oxo-dGTP + H2O = 8-oxo-dGMP + diphosphate + H(+). Not induced by oxidative damage (following treatment with paraquat or hydrogen peroxide). Not induced by mitomycin C. Not induced by sigma-B general stress inducers such as sodium chloride, ethanol or heat. In terms of biological role, involved in the GO system responsible for removing an oxidatively damaged form of guanine (7,8-dihydro-8-oxoguanine, 8-oxo-dGTP) from DNA and the nucleotide pool. 8-oxo-dGTP is inserted opposite dA and dC residues of template DNA with almost equal efficiency thus leading to A.T to G.C transversions. Functions, in conjunction with MutT, to protect vegetatively growing cells from DNA-damaging agents such as H(2)O(2) or t-BHP (t-butylhydroperoxide). The 2 proteins do not however protect spores. According to PubMed:15576788, phosphohydrolase that catalyzes the hydrolysis of all common nucleoside triphosphates as well as of the mutagenic analog 8-oxo-dGTP. The high catalytic efficiency on dGTP is in contrast to results from PubMed:14761999. According to PubMed:14761999, catalyzes the hydrolysis of 8-oxo-dGTP with a specific activity 413 times higher than that exhibited against dGTP. Preferentially catalyzes the hydrolysis of 8-oxo-dGTP and 8-oxo-GTP. According to PubMed:15576788, hydrolyzes nucleoside triphosphates in a stepwise fashion through the diphosphate to the monophosphate, releasing two molecules of inorganic orthophosphate. The chain is Putative 8-oxo-dGTP diphosphatase YtkD (ytkD) from Bacillus subtilis (strain 168).